Here is a 916-residue protein sequence, read N- to C-terminus: Alanine--tRNA ligase (916 aa).

Zn(2+) is bound by residues His611, His615, Cys714, and His718.

It belongs to the class-II aminoacyl-tRNA synthetase family. Zn(2+) is required as a cofactor.

It localises to the cytoplasm. The enzyme catalyses tRNA(Ala) + L-alanine + ATP = L-alanyl-tRNA(Ala) + AMP + diphosphate. Catalyzes the attachment of alanine to tRNA(Ala) in a two-step reaction: alanine is first activated by ATP to form Ala-AMP and then transferred to the acceptor end of tRNA(Ala). Also edits incorrectly charged Ser-tRNA(Ala) and Gly-tRNA(Ala) via its editing domain. The chain is Alanine--tRNA ligase from Methanospirillum hungatei JF-1 (strain ATCC 27890 / DSM 864 / NBRC 100397 / JF-1).